Here is a 320-residue protein sequence, read N- to C-terminus: uncharacterized protein (320 aa).

Arg61 bears the Omega-N-methylarginine mark. The disordered stretch occupies residues 299 to 320; that stretch reads LHLQHQKQTSKDAGRQTPERKA. Residues 307-320 show a composition bias toward basic and acidic residues; sequence TSKDAGRQTPERKA. Position 315 is a phosphothreonine (Thr315).

This is an uncharacterized protein from Mus musculus (Mouse).